The primary structure comprises 320 residues: GPI-specific phospholipase A2-like PGAP3 (320 aa).

An N-terminal signal peptide occupies residues Met-1–Gly-23. At Asp-24 to Arg-98 the chain is on the lumenal side. Asn-40 is a glycosylation site (N-linked (GlcNAc...) asparagine). Residues Phe-99–Leu-119 traverse the membrane as a helical segment. The Cytoplasmic portion of the chain corresponds to Val-120–Met-135. A helical membrane pass occupies residues Tyr-136–Phe-156. Over His-157–Tyr-169 the chain is Lumenal. A helical membrane pass occupies residues Phe-170 to Leu-190. Residues Gln-191–Ala-198 lie on the Cytoplasmic side of the membrane. The helical transmembrane segment at Phe-199 to Phe-219 threads the bilayer. Topologically, residues Asp-220–Tyr-223 are lumenal. Residues Asn-224 to Leu-244 form a helical membrane-spanning segment. The Cytoplasmic segment spans residues Arg-245–Met-257. Residues Val-258 to Phe-278 traverse the membrane as a helical segment. Position 279 (Trp-279) is a topological domain, lumenal. The helical transmembrane segment at Val-280 to Phe-299 threads the bilayer. The Cytoplasmic portion of the chain corresponds to Arg-300 to Asp-320.

This sequence belongs to the PGAP3 family.

It localises to the golgi apparatus membrane. Functionally, involved in the fatty acid remodeling steps of GPI-anchor maturation where the unsaturated acyl chain at sn-2 of inositol phosphate is replaced by a saturated stearoyl chain. May catalyze the first step of the fatty acid remodeling, by removing the unsaturated acyl chain at sn-2 of inositol phosphate, generating a lyso-GPI intermediate. The fatty acid remodeling steps is critical for the integration of GPI-APs into lipid rafts. In Mus musculus (Mouse), this protein is GPI-specific phospholipase A2-like PGAP3.